We begin with the raw amino-acid sequence, 142 residues long: Autophagy-related protein 31 (142 aa).

The protein resides in the cytoplasm. The protein localises to the cytoskeleton. It localises to the preautophagosomal structure. Functionally, plays a role in starvation-induced autophagy. Involved in mitophagy. Functions with ATG17 and ATG29 at the preautophagosomal structure (PAS) in order to form normal autophagosomes under starvation conditions. May be involved in microtubule function, such as chromosome segregation and karyogamy. The polypeptide is Autophagy-related protein 31 (CIS1) (Eremothecium gossypii (strain ATCC 10895 / CBS 109.51 / FGSC 9923 / NRRL Y-1056) (Yeast)).